The following is a 693-amino-acid chain: Putative tyrosinase-like protein tyr-3 (693 aa).

The N-terminal stretch at 1 to 18 (MIRYIILLVYFLIFEVNS) is a signal peptide. Residues His-142, His-152, His-161, His-281, His-285, and His-308 each contribute to the Cu cation site. ShKT domains are found at residues 472 to 506 (CFNENECCGPWSAKGECQKNPVYMNVWCKASCRQC), 516 to 550 (CSDRHTNCAMWSRSGECNKNPLWMSENCRSSCQKC), 591 to 625 (CYNEDQCCPIWAQRGQCRSNPGYMTCQCKVSCGVC), and 634 to 667 (CADYHYDCAAWARRGECLKNKWMPENCRRSCNTC). Disulfide bonds link Cys-472/Cys-506, Cys-479/Cys-499, Cys-488/Cys-503, Cys-516/Cys-550, Cys-523/Cys-543, Cys-532/Cys-547, Cys-591/Cys-625, Cys-598/Cys-618, Cys-607/Cys-622, Cys-634/Cys-667, Cys-641/Cys-660, and Cys-650/Cys-664.

It belongs to the tyrosinase family. Cu(2+) is required as a cofactor.

This Caenorhabditis elegans protein is Putative tyrosinase-like protein tyr-3 (tyr-3).